The sequence spans 359 residues: Putative mannose-1-phosphate guanyltransferase (359 aa).

The protein belongs to the transferase hexapeptide repeat family.

It catalyses the reaction alpha-D-mannose 1-phosphate + GTP + H(+) = GDP-alpha-D-mannose + diphosphate. In Sulfolobus acidocaldarius (strain ATCC 33909 / DSM 639 / JCM 8929 / NBRC 15157 / NCIMB 11770), this protein is Putative mannose-1-phosphate guanyltransferase (mpg1).